We begin with the raw amino-acid sequence, 170 residues long: Peptide deformylase (170 aa).

Fe cation-binding residues include cysteine 91 and histidine 133. The active site involves glutamate 134. Histidine 137 serves as a coordination point for Fe cation.

The protein belongs to the polypeptide deformylase family. Fe(2+) is required as a cofactor.

It carries out the reaction N-terminal N-formyl-L-methionyl-[peptide] + H2O = N-terminal L-methionyl-[peptide] + formate. Its function is as follows. Removes the formyl group from the N-terminal Met of newly synthesized proteins. Requires at least a dipeptide for an efficient rate of reaction. N-terminal L-methionine is a prerequisite for activity but the enzyme has broad specificity at other positions. This chain is Peptide deformylase, found in Pasteurella multocida (strain Pm70).